Consider the following 186-residue polypeptide: MIHVKYIILGFIMVSSLNLYAANNDIIANKKVVKVEVSNEHLKTLNEASTLLISCVDFRLIDETDKLMKQLGLEDNFDKVSLPGASLALINDKYTYWGKTIEDTIEILQELHNIKQIVFLDHRECGAYKILIGQEQLNTKEKETAAHAAILNKARDIIKEKFPQLKVYTFLMGLDGVVEQIYEIPS.

A signal peptide spans 1 to 21 (MIHVKYIILGFIMVSSLNLYA).

This is an uncharacterized protein from Rickettsia conorii (strain ATCC VR-613 / Malish 7).